An 899-amino-acid chain; its full sequence is Solute carrier family 12 member 9 (899 aa).

Topologically, residues 1-42 (MANEHSPLLVHGVYSMMGNAEDSRGGSAGTGEASNPKTDPRK) are cytoplasmic. The chain crosses the membrane as a helical span at residues 43–63 (LNTFFGVMVPTILSMFSIVLF). Residues 64 to 78 (LRTGFVVGHAGLLHG) lie on the Extracellular side of the membrane. The chain crosses the membrane as a helical span at residues 79 to 99 (LLMLFVAYFIISLTILSICAI). Residues 100–125 (STNGAVEGGGAYFMISRSLGPEFGGS) are Cytoplasmic-facing. The chain crosses the membrane as a helical span at residues 126–146 (IGLMFYLAKVCACGVYVLGLV). Topologically, residues 147–175 (EAIMDVFGQDPGSSVAQGLRVLPQGYWYT) are extracellular. Residues 176–196 (VLYSSVVLLLCMLVCLVGAHI) traverse the membrane as a helical segment. Residues 197–201 (YAKAS) are Cytoplasmic-facing. A helical transmembrane segment spans residues 202–222 (FLILLVVTVSLISIIISPLIV). Over 223–269 (SPQGFNITHTYGNNHSVTVSPSYTGFNSTTLKNNLGPRYSLDYSTNT) the chain is Extracellular. N228, N236, and N249 each carry an N-linked (GlcNAc...) asparagine glycan. A helical membrane pass occupies residues 270–290 (MMSFATVFAVMFTSCTGIMAG). Topologically, residues 291–306 (ANMSGELKNPSESIPK) are cytoplasmic. Residues 307 to 327 (GTIMAVAYTFTVYVLLYLLLS) traverse the membrane as a helical segment. Residues 328–350 (STCDRSLLLNDYAVFQRVNVWPP) are Extracellular-facing. A helical transmembrane segment spans residues 351–371 (FVTIGVYCASLSAAMCSMIGA). Residues 372–373 (SR) lie on the Cytoplasmic side of the membrane. Residues 374 to 394 (ILHALALDQLFGLPLAPAAVT) form a helical membrane-spanning segment. The Extracellular segment spans residues 395–399 (SSSGN). Residues 400–420 (PWVSVLYTWALVQCTLFAGQL) traverse the membrane as a helical segment. Residue N421 is a topological domain, cytoplasmic. Residues 422 to 442 (VIAGIVTVFYLLAYAAVDLAC) form a helical membrane-spanning segment. Topologically, residues 443–455 (LALEWASAPNFRP) are extracellular. The helical transmembrane segment at 456–476 (TFQFFSWHTCLLGIISCVVMM) threads the bilayer. The Extracellular portion of the chain corresponds to 477–487 (FVINPVYSSAS). A helical transmembrane segment spans residues 488-510 (IVLLLLLLLFLHYRSPTSSWGYI). At 511–563 (SQALIFHQVRKYLLMLDSRKDHVKFWRPQVLLMVSNPRSSCQLICFVNQLKKG) the chain is on the cytoplasmic side. A helical transmembrane segment spans residues 564 to 584 (GLFVLGHVQIGDLDVLPADPV). Over 585 to 749 (QPQYNFWLSL…NLLTPGSASY (165 aa)) the chain is Extracellular. A helical membrane pass occupies residues 750-770 (ADVGSLFLLQMACVLNMASGW). At 771-899 (RRARLRIFVC…GVTPVTCTEL (129 aa)) the chain is on the cytoplasmic side.

It belongs to the SLC12A transporter family.

The protein localises to the cell membrane. Its subcellular location is the lysosome membrane. Functionally, seems to correspond to a subunit of a multimeric transport system and thus, additional subunits may be required for its function. May play a role in lysosomal ion flux and osmoregulation. The polypeptide is Solute carrier family 12 member 9 (slc12a9) (Danio rerio (Zebrafish)).